A 92-amino-acid polypeptide reads, in one-letter code: Small ribosomal subunit protein uS19 (92 aa).

This sequence belongs to the universal ribosomal protein uS19 family.

Protein S19 forms a complex with S13 that binds strongly to the 16S ribosomal RNA. The polypeptide is Small ribosomal subunit protein uS19 (Shewanella halifaxensis (strain HAW-EB4)).